The primary structure comprises 66 residues: Surface composition regulator (66 aa).

The protein belongs to the GlgS family.

In terms of biological role, major determinant of cell surface composition. Negatively regulates motility, adhesion and synthesis of biofilm exopolysaccharides. This is Surface composition regulator from Shigella flexneri.